Here is an 84-residue protein sequence, read N- to C-terminus: UPF0457 protein BT9727_3043 (84 aa).

It belongs to the UPF0457 family.

This Bacillus thuringiensis subsp. konkukian (strain 97-27) protein is UPF0457 protein BT9727_3043.